The chain runs to 168 residues: HTH-type transcriptional regulator IscR (168 aa).

Residues lysine 2–serine 131 enclose the HTH rrf2-type domain. The H-T-H motif DNA-binding region spans leucine 28–lysine 51. [2Fe-2S] cluster contacts are provided by cysteine 92, cysteine 98, and cysteine 104.

The cofactor is [2Fe-2S] cluster.

Regulates the transcription of several operons and genes involved in the biogenesis of Fe-S clusters and Fe-S-containing proteins. This is HTH-type transcriptional regulator IscR from Vibrio vulnificus (strain CMCP6).